We begin with the raw amino-acid sequence, 429 residues long: METQFRRGGLGCSPASIKRKKKREDSGDFGLQVSTMFSEDDFQSTERAPYGPQLQWSQDLPRVQVFREQANLEDRSPRRTQRITGGEQVLWGPITQIFPTVRPADLTRVIMPLEQRSQHCKPEEGLQAQEEDLGLVGAQALQAEEQEAAFFSSTLNVGTLEELPAAESPSPPQSPQEESFSPTAMDAIFGSLSDEGSGSQEKEGPSTSPDLIDPESFSQDILHDKIIDLVHLLLRKYRVKGLITKAEMLGSVIKNYEDYFPEIFREASVCMQLLFGIDVKEVDPTSHSYVLVTSLNLSYDGIQCNEQSMPKSGLLIIVLGVIFMEGNCIPEEVMWEVLSIMGVYAGREHFLFGEPKRLLTQNWVQEKYLVYRQVPGTDPACYEFLWGPRAHAETSKMKVLEYIANANGRDPTSYPSLYEDALREEGEGV.

Disordered stretches follow at residues 1 to 30 (METQ…GDFG) and 188 to 215 (IFGS…IDPE). Polar residues predominate over residues 194–209 (DEGSGSQEKEGPSTSP). An MAGE domain is found at 222-421 (LHDKIIDLVH…TSYPSLYEDA (200 aa)).

In terms of tissue distribution, expressed in tumors of several types, such as melanoma, head and neck squamous cell carcinoma, lung carcinoma and breast carcinoma. Expressed in testis, ovary, prostate, cancerous prostate, breast and adrenal tissue.

It is found in the nucleus. It localises to the cytoplasm. Its function is as follows. Acts as androgen receptor coregulator that increases androgen receptor activity by modulating the receptors interdomain interaction. May play a role in embryonal development and tumor transformation or aspects of tumor progression. This Homo sapiens (Human) protein is Melanoma-associated antigen 11.